Reading from the N-terminus, the 250-residue chain is Glutamate racemase (250 aa).

Residues 7 to 8 (DS) and 39 to 40 (YG) each bind substrate. Catalysis depends on Cys70, which acts as the Proton donor/acceptor. 71 to 72 (NT) serves as a coordination point for substrate. The active-site Proton donor/acceptor is Cys180. 181–182 (TH) contacts substrate.

This sequence belongs to the aspartate/glutamate racemases family.

The enzyme catalyses L-glutamate = D-glutamate. Its pathway is cell wall biogenesis; peptidoglycan biosynthesis. In terms of biological role, provides the (R)-glutamate required for cell wall biosynthesis. The sequence is that of Glutamate racemase from Campylobacter jejuni subsp. jejuni serotype O:2 (strain ATCC 700819 / NCTC 11168).